The primary structure comprises 301 residues: Asialoglycoprotein receptor 2 (301 aa).

The interval Met-1 to His-29 is disordered. Over Met-1–Arg-58 the chain is Cytoplasmic. Ser-13 carries the phosphoserine modification. Residue Cys-54 is the site of S-palmitoyl cysteine attachment. Residues Leu-59–Ser-79 traverse the membrane as a helical; Signal-anchor for type II membrane protein segment. Residues Gln-80 to Tyr-301 are Extracellular-facing. N-linked (GlcNAc...) asparagine glycans are attached at residues Asn-97, Asn-119, and Asn-165. The region spanning Cys-169–Arg-295 is the C-type lectin domain. Intrachain disulfides connect Cys-170–Cys-181, Cys-198–Cys-293, and Cys-271–Cys-285.

In terms of assembly, interacts with LASS2. As to expression, expressed exclusively in hepatic parenchymal cells.

Its subcellular location is the membrane. Functionally, mediates the endocytosis of plasma glycoproteins to which the terminal sialic acid residue on their complex carbohydrate moieties has been removed. The receptor recognizes terminal galactose and N-acetylgalactosamine units. After ligand binding to the receptor, the resulting complex is internalized and transported to a sorting organelle, where receptor and ligand are disassociated. The receptor then returns to the cell membrane surface. This is Asialoglycoprotein receptor 2 (Asgr2) from Rattus norvegicus (Rat).